We begin with the raw amino-acid sequence, 421 residues long: Trimethyllysine dioxygenase, mitochondrial (421 aa).

A mitochondrion-targeting transit peptide spans 1 to 15; the sequence is MWYHKLLHQQSRLRN. N6-acetyllysine occurs at positions 179 and 236. Fe cation contacts are provided by histidine 242, aspartate 244, and histidine 389.

It belongs to the gamma-BBH/TMLD family. Homodimer. Fe(2+) serves as cofactor. Requires L-ascorbate as cofactor.

It localises to the mitochondrion matrix. The catalysed reaction is N(6),N(6),N(6)-trimethyl-L-lysine + 2-oxoglutarate + O2 = (3S)-3-hydroxy-N(6),N(6),N(6)-trimethyl-L-lysine + succinate + CO2. The protein operates within amine and polyamine biosynthesis; carnitine biosynthesis. Converts trimethyllysine (TML) into hydroxytrimethyllysine (HTML). In Mus musculus (Mouse), this protein is Trimethyllysine dioxygenase, mitochondrial (Tmlhe).